Here is a 430-residue protein sequence, read N- to C-terminus: MLRMRVRPPSAIPVFLIFVLLPFVLTSKPITPHYGPGHITSDWCGFGDSRSDCGNQHTPKSLDIPQELCPKFSSRTGSSMFISMHWNNDSDFNAFGYSNCGVEKVFYEGVNFSPYRNYTCYQEGSFGWVSNKVGFYSKLYSMASTSRCIKLINLDPPTNFTNYRNGTCTGNGGTAKMPDNPQLVIFNSVVKVSTQFVLPSSSDGFSCTKHLVPFCYIDGGCFEMSGVCYPFGYYYQSPSFYHAFYTNGTAGLHRYICDYLEMKPGVYNATTFGKFLIYPTKSYCMDTMNYTVPVQAVQSIWSENRQSDDAIGQACKSPYCIFYNKTKPYLAPNGADENHGDEEVRQMMQGLLVNSSCVSPQGSTPLALYSSEMIYTPNYGSCPQYYKLFETSSDENVDVTSSAYFVATWVLLVLVIILIFILISFCLSSY.

The N-terminal stretch at 1–27 is a signal peptide; that stretch reads MLRMRVRPPSAIPVFLIFVLLPFVLTS. Residues 16 to 133 form an esterase domain first part region; the sequence is LIFVLLPFVL…GSFGWVSNKV (118 aa). Residues 28–404 are Virion surface-facing; sequence KPITPHYGPG…ENVDVTSSAY (377 aa). The active-site Nucleophile is serine 49. Residues cysteine 53 and cysteine 69 are joined by a disulfide bond. N-linked (GlcNAc...) asparagine; by host glycans are attached at residues asparagine 88, asparagine 117, asparagine 159, asparagine 165, asparagine 247, asparagine 268, and asparagine 289. 3 disulfides stabilise this stretch: cysteine 120–cysteine 168, cysteine 207–cysteine 284, and cysteine 215–cysteine 257. A receptor binding region spans residues 134–274; the sequence is GFYSKLYSMA…GVYNATTFGK (141 aa). The segment at 275–390 is esterase domain second part; that stretch reads FLIYPTKSYC…SCPQYYKLFE (116 aa). Cysteine 315 and cysteine 320 are oxidised to a cystine. Asparagine 324 carries an N-linked (GlcNAc...) asparagine; by host glycan. Active-site charge relay system residues include aspartate 336 and histidine 339. N-linked (GlcNAc...) asparagine; by host glycosylation is present at asparagine 354. Residues cysteine 357 and cysteine 382 are joined by a disulfide bond. Residues 405-425 form a helical membrane-spanning segment; sequence FVATWVLLVLVIILIFILISF. Topologically, residues 426–430 are intravirion; that stretch reads CLSSY.

This sequence belongs to the influenza type C/coronaviruses hemagglutinin-esterase family. Post-translationally, N-glycosylated.

It localises to the virion membrane. It is found in the host cell membrane. The enzyme catalyses N-acetyl-9-O-acetylneuraminate + H2O = N-acetylneuraminate + acetate + H(+). The catalysed reaction is N-acetyl-4-O-acetylneuraminate + H2O = N-acetylneuraminate + acetate + H(+). Structural protein that makes short spikes at the surface of the virus. Contains receptor binding and receptor-destroying activities. Mediates de-O-acetylation of N-acetyl-9-O-acetylneuraminic acid, which is probably the receptor determinant recognized by the virus on the surface of erythrocytes and susceptible cells. This receptor-destroying activity is important for virus release as it probably helps preventing self-aggregation and ensures the efficient spread of the progeny virus from cell to cell. May serve as a secondary viral attachment protein for initiating infection, the spike protein being the major one. Seems to be a 'luxury' protein that is not absolutely necessary for virus infection in culture. However, its presence in the virus may alter its pathogenicity. May become a target for both the humoral and the cellular branches of the immune system. The chain is Hemagglutinin-esterase (HE) from Porcine torovirus (strain P10) (PoTV).